We begin with the raw amino-acid sequence, 173 residues long: Crossover junction endodeoxyribonuclease RuvC (173 aa).

Catalysis depends on residues Asp-8, Glu-67, and Asp-139. Mg(2+)-binding residues include Asp-8, Glu-67, and Asp-139.

Belongs to the RuvC family. Homodimer which binds Holliday junction (HJ) DNA. The HJ becomes 2-fold symmetrical on binding to RuvC with unstacked arms; it has a different conformation from HJ DNA in complex with RuvA. In the full resolvosome a probable DNA-RuvA(4)-RuvB(12)-RuvC(2) complex forms which resolves the HJ. The cofactor is Mg(2+).

The protein resides in the cytoplasm. The enzyme catalyses Endonucleolytic cleavage at a junction such as a reciprocal single-stranded crossover between two homologous DNA duplexes (Holliday junction).. The RuvA-RuvB-RuvC complex processes Holliday junction (HJ) DNA during genetic recombination and DNA repair. Endonuclease that resolves HJ intermediates. Cleaves cruciform DNA by making single-stranded nicks across the HJ at symmetrical positions within the homologous arms, yielding a 5'-phosphate and a 3'-hydroxyl group; requires a central core of homology in the junction. The consensus cleavage sequence is 5'-(A/T)TT(C/G)-3'. Cleavage occurs on the 3'-side of the TT dinucleotide at the point of strand exchange. HJ branch migration catalyzed by RuvA-RuvB allows RuvC to scan DNA until it finds its consensus sequence, where it cleaves and resolves the cruciform DNA. This is Crossover junction endodeoxyribonuclease RuvC from Shewanella loihica (strain ATCC BAA-1088 / PV-4).